Reading from the N-terminus, the 363-residue chain is Protein-arginine kinase (363 aa).

Residues 24-255 (IVLSSRIRLA…QQLIAQERAA (232 aa)) enclose the Phosphagen kinase C-terminal domain. Residues 27 to 31 (SSRIR), histidine 92, arginine 126, 177 to 181 (RASVM), and 208 to 213 (RGTYGE) contribute to the ATP site. Positions 338-343 (RDVRRA) match the RDXXRA motif of the pArg binding pocket involved in allosteric regulation motif.

The protein belongs to the ATP:guanido phosphotransferase family.

It carries out the reaction L-arginyl-[protein] + ATP = N(omega)-phospho-L-arginyl-[protein] + ADP + H(+). Appears to be allosterically activated by the binding of pArg-containing polypeptides to the pArg-binding pocket localized in the C-terminal domain of McsB. Functionally, catalyzes the specific phosphorylation of arginine residues in a large number of proteins. Is part of the bacterial stress response system. Protein arginine phosphorylation has a physiologically important role and is involved in the regulation of many critical cellular processes, such as protein homeostasis, motility, competence, and stringent and stress responses, by regulating gene expression and protein activity. The sequence is that of Protein-arginine kinase from Geobacillus thermodenitrificans (strain NG80-2).